We begin with the raw amino-acid sequence, 449 residues long: Glutamate--tRNA ligase (449 aa).

A 'HIGH' region motif is present at residues proline 10 to asparagine 20. The 'KMSKS' region signature appears at lysine 214–arginine 218. Lysine 217 contributes to the ATP binding site.

It belongs to the class-I aminoacyl-tRNA synthetase family. Glutamate--tRNA ligase type 1 subfamily. As to quaternary structure, monomer.

It localises to the cytoplasm. It catalyses the reaction tRNA(Glu) + L-glutamate + ATP = L-glutamyl-tRNA(Glu) + AMP + diphosphate. Catalyzes the attachment of glutamate to tRNA(Glu) in a two-step reaction: glutamate is first activated by ATP to form Glu-AMP and then transferred to the acceptor end of tRNA(Glu). This Onion yellows phytoplasma (strain OY-M) protein is Glutamate--tRNA ligase.